A 373-amino-acid chain; its full sequence is Chaperone protein DnaJ (373 aa).

Residues 5–70 (DYYEVLGLQK…EKKSNYDQFG (66 aa)) form the J domain. The CR-type zinc finger occupies 132–214 (GVEKEITVNR…CRGNGNVRKT (83 aa)). Positions 145, 148, 162, 165, 188, 191, 202, and 205 each coordinate Zn(2+). CXXCXGXG motif repeat units lie at residues 145 to 152 (CEHCNGSG), 162 to 169 (CPTCSGTG), 188 to 195 (CDRCSGTG), and 202 to 209 (CTHCRGNG).

The protein belongs to the DnaJ family. In terms of assembly, homodimer. The cofactor is Zn(2+).

It is found in the cytoplasm. Functionally, participates actively in the response to hyperosmotic and heat shock by preventing the aggregation of stress-denatured proteins and by disaggregating proteins, also in an autonomous, DnaK-independent fashion. Unfolded proteins bind initially to DnaJ; upon interaction with the DnaJ-bound protein, DnaK hydrolyzes its bound ATP, resulting in the formation of a stable complex. GrpE releases ADP from DnaK; ATP binding to DnaK triggers the release of the substrate protein, thus completing the reaction cycle. Several rounds of ATP-dependent interactions between DnaJ, DnaK and GrpE are required for fully efficient folding. Also involved, together with DnaK and GrpE, in the DNA replication of plasmids through activation of initiation proteins. The sequence is that of Chaperone protein DnaJ from Clostridium botulinum (strain Alaska E43 / Type E3).